The sequence spans 260 residues: Homeobox-leucine zipper protein HOX25 (260 aa).

Residues 1–10 (MEDLVDELYG) are compositionally biased toward acidic residues. Disordered stretches follow at residues 1–24 (MEDL…ARKR), 121–145 (ANGK…PESA), and 190–221 (SPES…YPSS). Residues 19 to 79 (AAARKRRLTA…NRRARWKTKQ (61 aa)) constitute a DNA-binding region (homeobox). A leucine-zipper region spans residues 78 to 122 (KQLELDFDRLRAAHDELLAGRAALAADNESLRSQVILLTEKLQAN). The segment covering 205–218 (SEDDCGGAGSDDDY) has biased composition (acidic residues).

This sequence belongs to the HD-ZIP homeobox family. Class I subfamily. Expressed in roots, leaf sheaths and blades and panicles.

Its subcellular location is the nucleus. In terms of biological role, probable transcription factor. The sequence is that of Homeobox-leucine zipper protein HOX25 (HOX25) from Oryza sativa subsp. indica (Rice).